The following is a 595-amino-acid chain: MTSYHSHPPKAYRRFESVCTQAPNAIAVVHEGKPVTYQQLQTQVLERSEALIRQGLADHPYMPLMANRCLEYLITMLACCKLGITYVSIEPSTPSKRLIAVLEQLGCNHLLLLGQPTDLRPDPTLTCFRLDDCGTLCSDGPALRQPIRRRLDDASVITVMFTSGTTGVPKGVRISQDGLLNLVDNVQQQVQGKPRSYVHHSSIGFDAALFEVWVPLLTGACVTLQPSEFNIDALDHCVRAASCDVLLLTTSLFHLVAQHRLSMLEAVRVLYVGGEVLKPVHARALLLANPRITLVNGYGPTENTVFSTWYSLNKPEDAERDVIPIGQFLHQVHGKIVDAKLQEVEVGTPGELLLTGANLALGYLDEALTPTRFLQLPEGTYYRTGDYVIQDEHGMLFYQGRIDEQVKIKGFRVEIAEVEHALTQLPGVAQAVVQAHVMNDLENSLHAFIVFRHGSPTIEESKLMSLLGDRLPHYMVPRRIHYLAELPLTANGKVDKRSLQPPEKAAVVSPQAGSAVLEIWSGILGTRNLQLEHSIYGYGASSLSVVMAHSRINEILGRTTPFDEVARLSTFQEWVQYYATHADPVTSLRSQHGNH.

Residues Val507–Ala582 form the Carrier domain. Ser542 is subject to O-(pantetheine 4'-phosphoryl)serine.

The protein belongs to the ATP-dependent AMP-binding enzyme family. Homodimer. It depends on pantetheine 4'-phosphate as a cofactor.

It carries out the reaction L-alloisoleucine + holo-[CmaA peptidyl-carrier protein] + ATP = L-alloisoleucyl-[CmaA peptidyl-carrier protein] + AMP + diphosphate. Functionally, involved in the biosynthesis of the phytotoxin coronatine (COR) which mimics the plant hormone jasmonic acid isoleucine and promotes opening of stomata for bacterial entry, bacterial growth in the apoplast, systemic susceptibility, and disease symptoms. CmaA catalyzes the adenylation of L-allo-isoleucine (via the A domain) and the attachment of L-allo-isoleucine to the 4'-phosphopantetheine arm located within the T domain of CmaA. It can also use L-isoleucine, L-leucine and L-valine as substrates. This chain is L-allo-isoleucine:holo-[CmaA peptidyl-carrier protein] ligase, found in Pseudomonas savastanoi pv. glycinea (Pseudomonas syringae pv. glycinea).